The following is a 299-amino-acid chain: MKPISIIGVPMDLGQTRRGVDMGPSAMRYAGVIERLERLHYDIEDLGDIPIGKAERLHEQGDSRLRNLKAVAEANEKLAAAVDQVVQRGRFPLVLGGDHSIAIGTLAGVAKHYERLGVIWYDAHGDVNTAETSPSGNIHGMPLAASLGFGHPALTQIGGYSPKIKPEHVVLIGVRSLDEGEKKFIREKGIKIYTMHEVDRLGMTRVMEETIAYLKERTDGVHLSLDLDGLDPSDAPGVGTPVIGGLTYRESHLAMEMLAEAQIITSAEFVEVNPILDERNKTASVAVALMGSLFGEKLM.

Residues His-99, Asp-122, His-124, and Asp-126 each coordinate Mn(2+). Residues 124–128, 135–137, and Asp-178 each bind substrate; these read HGDVN and SGN. Mn(2+)-binding residues include Asp-226 and Asp-228. Substrate is bound by residues Thr-240 and Glu-271.

This sequence belongs to the arginase family. In terms of assembly, homohexamer. Mn(2+) is required as a cofactor.

The catalysed reaction is L-arginine + H2O = urea + L-ornithine. The protein operates within nitrogen metabolism; urea cycle; L-ornithine and urea from L-arginine: step 1/1. Controls arginine catabolism. The protein is Arginase (rocF) of Bacillus caldovelox.